The primary structure comprises 476 residues: Aspartyl/glutamyl-tRNA(Asn/Gln) amidotransferase subunit B (476 aa).

This sequence belongs to the GatB/GatE family. GatB subfamily. In terms of assembly, heterotrimer of A, B and C subunits.

It catalyses the reaction L-glutamyl-tRNA(Gln) + L-glutamine + ATP + H2O = L-glutaminyl-tRNA(Gln) + L-glutamate + ADP + phosphate + H(+). The enzyme catalyses L-aspartyl-tRNA(Asn) + L-glutamine + ATP + H2O = L-asparaginyl-tRNA(Asn) + L-glutamate + ADP + phosphate + 2 H(+). Functionally, allows the formation of correctly charged Asn-tRNA(Asn) or Gln-tRNA(Gln) through the transamidation of misacylated Asp-tRNA(Asn) or Glu-tRNA(Gln) in organisms which lack either or both of asparaginyl-tRNA or glutaminyl-tRNA synthetases. The reaction takes place in the presence of glutamine and ATP through an activated phospho-Asp-tRNA(Asn) or phospho-Glu-tRNA(Gln). The polypeptide is Aspartyl/glutamyl-tRNA(Asn/Gln) amidotransferase subunit B (Neisseria meningitidis serogroup B (strain ATCC BAA-335 / MC58)).